Reading from the N-terminus, the 142-residue chain is Bacilliredoxin ABC2448 (142 aa).

Belongs to the bacilliredoxin family.

In Shouchella clausii (strain KSM-K16) (Alkalihalobacillus clausii), this protein is Bacilliredoxin ABC2448.